We begin with the raw amino-acid sequence, 379 residues long: Glucose-1-phosphate adenylyltransferase (379 aa).

Residues glycine 164, 179–180, and serine 190 contribute to the alpha-D-glucose 1-phosphate site; that span reads EK.

This sequence belongs to the bacterial/plant glucose-1-phosphate adenylyltransferase family. Homotetramer.

It catalyses the reaction alpha-D-glucose 1-phosphate + ATP + H(+) = ADP-alpha-D-glucose + diphosphate. It functions in the pathway glycan biosynthesis; glycogen biosynthesis. Functionally, involved in the biosynthesis of ADP-glucose, a building block required for the elongation reactions to produce glycogen. Catalyzes the reaction between ATP and alpha-D-glucose 1-phosphate (G1P) to produce pyrophosphate and ADP-Glc. The sequence is that of Glucose-1-phosphate adenylyltransferase from Streptococcus agalactiae serotype III (strain NEM316).